The primary structure comprises 146 residues: Hemoglobin subunit beta (146 aa).

An N-acetylvaline modification is found at V1. The region spanning 2 to 146 is the Globin domain; that stretch reads HLTGEEKSAV…VANALAHKYH (145 aa). T12 carries the post-translational modification Phosphothreonine. S44 is modified (phosphoserine). K59 is modified (N6-acetyllysine). Position 63 (H63) interacts with heme b. K82 bears the N6-acetyllysine mark. Residue H92 coordinates heme b. The residue at position 93 (C93) is an S-nitrosocysteine. An N6-acetyllysine modification is found at K144.

This sequence belongs to the globin family. In terms of assembly, heterotetramer of two alpha chains and two beta chains. As to expression, red blood cells.

In terms of biological role, involved in oxygen transport from the lung to the various peripheral tissues. This is Hemoglobin subunit beta (HBB) from Nycticebus coucang (Slow loris).